The sequence spans 387 residues: [LysW]-aminoadipate semialdehyde/glutamate semialdehyde transaminase (387 aa).

Pyridoxal 5'-phosphate contacts are provided by residues glycine 96–threonine 97 and phenylalanine 123. Arginine 126 contacts substrate. Residue aspartate 207 to glutamine 210 participates in pyridoxal 5'-phosphate binding. N6-(pyridoxal phosphate)lysine is present on lysine 236. Serine 264 provides a ligand contact to substrate. Threonine 265 contacts pyridoxal 5'-phosphate.

The protein belongs to the class-III pyridoxal-phosphate-dependent aminotransferase family. LysJ subfamily. In terms of assembly, homodimer. Pyridoxal 5'-phosphate serves as cofactor.

The protein localises to the cytoplasm. The enzyme catalyses [amino-group carrier protein]-C-terminal-gamma-(L-lysyl)-L-glutamate + 2-oxoglutarate = [amino-group carrier protein]-C-terminal-N-(1-carboxy-5-oxopentan-1-yl)-L-glutamine + L-glutamate. It carries out the reaction [amino-group carrier protein]-C-terminal-gamma-(L-ornithyl)-L-glutamate + 2-oxoglutarate = [amino-group carrier protein]-C-terminal-gamma-(L-glutamyl-5-semialdehyde)-L-glutamate + L-glutamate. It functions in the pathway amino-acid biosynthesis; L-lysine biosynthesis via AAA pathway; L-lysine from L-alpha-aminoadipate (Thermus route): step 4/5. It participates in amino-acid biosynthesis; L-arginine biosynthesis. Involved in both the arginine and lysine biosynthetic pathways. The chain is [LysW]-aminoadipate semialdehyde/glutamate semialdehyde transaminase from Sulfolobus acidocaldarius (strain ATCC 33909 / DSM 639 / JCM 8929 / NBRC 15157 / NCIMB 11770).